Reading from the N-terminus, the 350-residue chain is tRNA uridine(34) hydroxylase (350 aa).

The Rhodanese domain occupies 146–240; the sequence is DDPDALFIDM…YARKAREQGL (95 aa). Catalysis depends on Cys-200, which acts as the Cysteine persulfide intermediate.

This sequence belongs to the TrhO family.

It carries out the reaction uridine(34) in tRNA + AH2 + O2 = 5-hydroxyuridine(34) in tRNA + A + H2O. Catalyzes oxygen-dependent 5-hydroxyuridine (ho5U) modification at position 34 in tRNAs, the first step in 5-carboxymethoxyuridine (cmo5U) biosynthesis. May be part of an alternate pathway, which is able to bypass cmo5U biogenesis in a subset of tRNAs under aerobic conditions. This Escherichia coli O157:H7 protein is tRNA uridine(34) hydroxylase.